Reading from the N-terminus, the 387-residue chain is Mannitol-1-phosphate 5-dehydrogenase (387 aa).

3–14 (ALHFGAGNIGRG) contributes to the NAD(+) binding site.

This sequence belongs to the mannitol dehydrogenase family.

It carries out the reaction D-mannitol 1-phosphate + NAD(+) = beta-D-fructose 6-phosphate + NADH + H(+). The sequence is that of Mannitol-1-phosphate 5-dehydrogenase from Yersinia pestis bv. Antiqua (strain Antiqua).